The primary structure comprises 96 residues: Small ribosomal subunit protein bS6c (96 aa).

Belongs to the bacterial ribosomal protein bS6 family.

The protein localises to the plastid. It localises to the chloroplast. Its function is as follows. Binds together with bS18 to 16S ribosomal RNA. In Guillardia theta (Cryptophyte), this protein is Small ribosomal subunit protein bS6c (rps6).